Consider the following 366-residue polypeptide: DNA-directed RNA polymerase II subunit GRINL1A (366 aa).

A disordered region spans residues 1–23 (MFSLPRGFEPPAPEDLGRQSSAE). Positions 15 to 39 (DLGRQSSAELRERLRRQERLLRNEK) form a coiled coil. Residues 29 to 68 (RRQERLLRNEKFICKLPDKGKKISDTVAKLKAAISEREEV) are important for transcription repressor activity. Disordered stretches follow at residues 88–140 (ATTR…HRGN), 158–182 (IRAR…QEEE), 201–225 (ADQS…ETPK), and 237–280 (ARNP…RRAR). Over residues 90–100 (TRADTDVDKAQ) the composition is skewed to basic and acidic residues. Low complexity predominate over residues 101 to 127 (SSDLMLDTSSLDPDCSSIDIKSSKSTS). The segment at 225 to 296 (KKPHYMKVLE…TAARLLPLHH (72 aa)) is interaction with Pol II. Residues 251–272 (VLPTQQSDSPSHCQRGQSPASS) are compositionally biased toward polar residues. Ser-268 carries the post-translational modification Phosphoserine. The interval 297-312 (LPAQLLSIEESLALQR) is important for transcription repressor activity. A coiled-coil region spans residues 299–333 (AQLLSIEESLALQREQKQNYEEMQAKLAAQKLAER). Residues 313–338 (EQKQNYEEMQAKLAAQKLAERLNIKM) are interaction with Pol II. The interval 338–366 (MQSYNPEGESSGRYREVRDEADAQSSDEC) is disordered. Residues 347 to 358 (SSGRYREVRDEA) show a composition bias toward basic and acidic residues.

It belongs to the GRINL1 family. As to quaternary structure, component of the Pol II(G) complex, which contains the RNA polymerase II (Pol II) core complex subunits and POLR2M isoform 1. Pol II(G) appears to be an abundant form of Pol II. In terms of processing, dephosphorylated at Ser-268 by the PNUTS-PP1 complex, promoting RNA polymerase II transcription pause-release.

It localises to the nucleus. In terms of biological role, appears to be a stable component of the Pol II(G) complex form of RNA polymerase II (Pol II). Pol II synthesizes mRNA precursors and many functional non-coding RNAs and is the central component of the basal RNA polymerase II transcription machinery. May play a role in the Mediator complex-dependent regulation of transcription activation. Acts as a negative regulator of transcriptional activation; this repression is relieved by the Mediator complex, which restores Pol II(G) activator-dependent transcription to a level equivalent to that of Pol II. This Mus musculus (Mouse) protein is DNA-directed RNA polymerase II subunit GRINL1A (Polr2m).